Consider the following 968-residue polypeptide: Translation initiation factor IF-2 (968 aa).

A compositionally biased stretch (low complexity) spans 51–76; it reads PAAGASKSEAPAAAPKAPASPAATRP. Residues 51–369 are disordered; that stretch reads PAAGASKSEA…GVSVPRGDGN (319 aa). The segment covering 77–87 has biased composition (pro residues); it reads APAPGPAAPKA. Residues 93 to 102 show a composition bias toward low complexity; it reads EAPAAASAPS. The segment covering 103–112 has biased composition (pro residues); that stretch reads APAPAAPAPA. 3 stretches are compositionally biased toward low complexity: residues 113 to 122, 128 to 170, and 239 to 254; these read APAAAASAPS, APST…GNNP, and GARP…PGAR. Positions 281-336 are enriched in gly residues; it reads GRPGGGGRGPGRPGGAPGTGGAPGAGGGAPAGGGFGKGGRGRGGTQGAFGKGGAGR. Basic residues predominate over residues 337–346; that stretch reads GKQRKSKRAK. The tr-type G domain maps to 461 to 632; the sequence is ARPPVVTVMG…AVLLTADAAL (172 aa). A G1 region spans residues 470–477; it reads GHVDHGKT. Residue 470–477 participates in GTP binding; it reads GHVDHGKT. The G2 stretch occupies residues 495–499; that stretch reads GITQH. The tract at residues 520 to 523 is G3; the sequence is DTPG. Residues 520–524 and 574–577 contribute to the GTP site; these read DTPGH and NKID. The interval 574-577 is G4; that stretch reads NKID. Positions 610–612 are G5; that stretch reads SAR.

Belongs to the TRAFAC class translation factor GTPase superfamily. Classic translation factor GTPase family. IF-2 subfamily.

It localises to the cytoplasm. Functionally, one of the essential components for the initiation of protein synthesis. Protects formylmethionyl-tRNA from spontaneous hydrolysis and promotes its binding to the 30S ribosomal subunits. Also involved in the hydrolysis of GTP during the formation of the 70S ribosomal complex. The sequence is that of Translation initiation factor IF-2 from Arthrobacter sp. (strain FB24).